A 364-amino-acid polypeptide reads, in one-letter code: Fructose-1,6-bisphosphatase class 1 2 (364 aa).

The Mg(2+) site is built by E101, D123, L125, and D126. Residues 126 to 129 (DGSS) and N218 contribute to the substrate site. E290 serves as a coordination point for Mg(2+).

It belongs to the FBPase class 1 family. As to quaternary structure, homotetramer. The cofactor is Mg(2+).

It localises to the cytoplasm. The catalysed reaction is beta-D-fructose 1,6-bisphosphate + H2O = beta-D-fructose 6-phosphate + phosphate. Its pathway is carbohydrate biosynthesis; gluconeogenesis. The polypeptide is Fructose-1,6-bisphosphatase class 1 2 (Cupriavidus taiwanensis (strain DSM 17343 / BCRC 17206 / CCUG 44338 / CIP 107171 / LMG 19424 / R1) (Ralstonia taiwanensis (strain LMG 19424))).